We begin with the raw amino-acid sequence, 121 residues long: Large ribosomal subunit protein uL3 (121 aa).

Position 62 is an N5-methylglutamine (Gln62).

Belongs to the universal ribosomal protein uL3 family. Part of the 50S ribosomal subunit. Forms a cluster with proteins L14 and L19. Post-translationally, methylated by PrmB.

One of the primary rRNA binding proteins, it binds directly near the 3'-end of the 23S rRNA, where it nucleates assembly of the 50S subunit. This is Large ribosomal subunit protein uL3 (rplC) from Aggregatibacter actinomycetemcomitans (Actinobacillus actinomycetemcomitans).